The sequence spans 83 residues: Putative membrane protein insertion efficiency factor (83 aa).

The segment at 64–83 (GGFDPVPLKKDKNSKTTHHH) is disordered.

This sequence belongs to the UPF0161 family.

The protein localises to the cell membrane. Its function is as follows. Could be involved in insertion of integral membrane proteins into the membrane. The protein is Putative membrane protein insertion efficiency factor of Staphylococcus epidermidis (strain ATCC 12228 / FDA PCI 1200).